The primary structure comprises 288 residues: Pyridoxal kinase PdxY (288 aa).

Substrate-binding positions include Ser12 and 47–48 (TQ). ATP is bound by residues Asp114, Glu151, Lys184, and 211–214 (RPLL). Asp225 serves as a coordination point for substrate.

This sequence belongs to the pyridoxine kinase family. PdxY subfamily. In terms of assembly, homodimer. Mg(2+) serves as cofactor.

It catalyses the reaction pyridoxal + ATP = pyridoxal 5'-phosphate + ADP + H(+). It functions in the pathway cofactor metabolism; pyridoxal 5'-phosphate salvage; pyridoxal 5'-phosphate from pyridoxal: step 1/1. Its function is as follows. Pyridoxal kinase involved in the salvage pathway of pyridoxal 5'-phosphate (PLP). Catalyzes the phosphorylation of pyridoxal to PLP. The sequence is that of Pyridoxal kinase PdxY from Pseudomonas paraeruginosa (strain DSM 24068 / PA7) (Pseudomonas aeruginosa (strain PA7)).